An 814-amino-acid chain; its full sequence is Flagellar radial spoke protein 1 (814 aa).

Arg243 bears the Asymmetric dimethylarginine mark. Positions 283–346 (VQSISTGNRE…PPPPAPKVDP (64 aa)) are disordered. Residues 303–329 (PEEDEEEEKEEEKEEPEEGEEGEEGEG) are compositionally biased toward acidic residues. Arg428 is modified (asymmetric dimethylarginine). 6 MORN repeats span residues 577 to 597 (YFGS…FATG), 600 to 622 (YAGE…DGGT), 623 to 645 (YVGE…DGSV), 646 to 662 (YTGS…GVYW), 671 to 685 (GEWK…GTYE), and 691 to 707 (FEGE…ATYT). The interval 739–769 (GIPPGSGDEPQLDEEGQPIEDTDKPPLPAHP) is disordered. Positions 748–758 (PQLDEEGQPIE) are enriched in acidic residues.

In terms of processing, asymmetrically dimethylated at Arg-243 and Arg-428 during flagellum resorption. Probably methylated by PRMT1.

The protein resides in the cytoplasm. The protein localises to the cytoskeleton. Its subcellular location is the flagellum axoneme. Its function is as follows. Flagellar radial spokes contribute to the regulation of dynein arm activity and thus the pattern of flagellar bending. They consist of a thin stalk, which is attached to the a subfiber of the outer doublet microtubule, and a bulbous head, which is attached to the stalk and appears to interact with the projections from the central pair of microtubules. This chain is Flagellar radial spoke protein 1, found in Chlamydomonas reinhardtii (Chlamydomonas smithii).